A 424-amino-acid chain; its full sequence is Glutamyl-tRNA reductase (424 aa).

Substrate is bound by residues T49–R52, S108, E113–Q115, and Q119. C50 serves as the catalytic Nucleophile. NADP(+) is bound at residue G188 to I193.

This sequence belongs to the glutamyl-tRNA reductase family. Homodimer.

It catalyses the reaction (S)-4-amino-5-oxopentanoate + tRNA(Glu) + NADP(+) = L-glutamyl-tRNA(Glu) + NADPH + H(+). It functions in the pathway porphyrin-containing compound metabolism; protoporphyrin-IX biosynthesis; 5-aminolevulinate from L-glutamyl-tRNA(Glu): step 1/2. Catalyzes the NADPH-dependent reduction of glutamyl-tRNA(Glu) to glutamate 1-semialdehyde (GSA). The protein is Glutamyl-tRNA reductase of Hahella chejuensis (strain KCTC 2396).